The chain runs to 465 residues: Plasma alpha-L-fucosidase (465 aa).

The N-terminal stretch at 1–26 (MRPQELPRLAFPLLLLLLLPPPPCPA) is a signal peptide. N-linked (GlcNAc...) asparagine glycosylation is found at asparagine 169 and asparagine 237. Serine 299 bears the Phosphoserine mark. N-linked (GlcNAc...) asparagine glycosylation occurs at asparagine 375.

It belongs to the glycosyl hydrolase 29 family. In terms of assembly, homotetramer.

The protein localises to the secreted. It catalyses the reaction an alpha-L-fucoside + H2O = L-fucose + an alcohol. In terms of biological role, alpha-L-fucosidase is responsible for hydrolyzing the alpha-1,6-linked fucose joined to the reducing-end N-acetylglucosamine of the carbohydrate moieties of glycoproteins. In Pongo abelii (Sumatran orangutan), this protein is Plasma alpha-L-fucosidase (FUCA2).